A 766-amino-acid polypeptide reads, in one-letter code: Isocitrate lyase 2 (766 aa).

Substrate is bound at residue 106–108 (GGW). Aspartate 177 provides a ligand contact to Mg(2+). Cysteine 215 serves as the catalytic Proton acceptor. Residues 216 to 217 (GH), arginine 252, 487 to 491 (NLSPS), and threonine 522 contribute to the substrate site.

Belongs to the isocitrate lyase/PEP mutase superfamily. Isocitrate lyase family. It depends on Mg(2+) as a cofactor.

The enzyme catalyses D-threo-isocitrate = glyoxylate + succinate. The protein operates within carbohydrate metabolism; glyoxylate cycle; (S)-malate from isocitrate: step 1/2. Involved in the persistence and virulence of Mycobacterium. Catalyzes the reversible formation of succinate and glyoxylate from isocitrate, a key step of the glyoxylate cycle, which operates as an anaplerotic route for replenishing the tricarboxylic acid cycle during growth on fatty acid substrates. The polypeptide is Isocitrate lyase 2 (aceA) (Mycobacterium bovis (strain ATCC BAA-935 / AF2122/97)).